The primary structure comprises 256 residues: Type III pantothenate kinase (256 aa).

Asp6–Val13 is an ATP binding site. Gly107–Ile110 provides a ligand contact to substrate. Asp109 serves as the catalytic Proton acceptor. Asp129 is a binding site for K(+). Thr132 contributes to the ATP binding site. Residue Thr184 coordinates substrate.

The protein belongs to the type III pantothenate kinase family. In terms of assembly, homodimer. It depends on NH4(+) as a cofactor. K(+) serves as cofactor.

The protein localises to the cytoplasm. The catalysed reaction is (R)-pantothenate + ATP = (R)-4'-phosphopantothenate + ADP + H(+). The protein operates within cofactor biosynthesis; coenzyme A biosynthesis; CoA from (R)-pantothenate: step 1/5. Functionally, catalyzes the phosphorylation of pantothenate (Pan), the first step in CoA biosynthesis. This chain is Type III pantothenate kinase, found in Bifidobacterium longum (strain DJO10A).